The chain runs to 26 residues: Potassium channel toxin alpha-KTx6 OcyKTx1 (26 aa).

Cysteine 3 and cysteine 24 are disulfide-bonded.

It belongs to the short scorpion toxin superfamily. Potassium channel inhibitor family. Alpha-KTx 06 subfamily. Expressed by the venom gland.

Its subcellular location is the secreted. Blocks voltage-gated potassium channels. In Opisthacanthus cayaporum (South American scorpion), this protein is Potassium channel toxin alpha-KTx6 OcyKTx1.